The chain runs to 508 residues: Protein phosphatase PP2A regulatory subunit B (508 aa).

WD repeat units lie at residues 19–58 (TEAD…KKQS), 81–122 (EIEE…IKLV), 166–204 (AHAY…QSFN), 215–255 (ELTE…LCDS), 274–312 (EITS…KPIK), and 329–370 (ENDA…GNDD). Residues 369–466 (DDKPKFKSAF…MRRRMTSGVG (98 aa)) form a disordered region. Residues 396 to 418 (DDDDDDDDDDDDEEADDEFDEEV) are compositionally biased toward acidic residues. Residues 447 to 461 (FKSKKSGQHPMRRRM) show a composition bias toward basic residues. The WD 7 repeat unit spans residues 477–507 (DFKKSILHLSWHPRENSVAIAATNNLYIFST).

The protein belongs to the phosphatase 2A regulatory subunit B family. PP2A exists in several trimeric forms, all of which consist of a core composed of a catalytic subunit associated with a 65 kDa (PR65) (Subunit A) and a 55 kDa (PR55) (Subunit B) regulatory subunit.

Its function is as follows. Phosphatase 2A affects a variety of biological processes in the cell such as transcription, cell cycle progression and cellular morphogenesis, and provides an initial identification of critical substrates for this phosphatase. The regulatory subunit may direct the catalytic subunit to distinct, albeit overlapping, subsets of substrates. This Candida tropicalis (Yeast) protein is Protein phosphatase PP2A regulatory subunit B (CDC55).